We begin with the raw amino-acid sequence, 136 residues long: Secreted RxLR effector protein 15 (136 aa).

A signal peptide spans 1–22; that stretch reads MRGHSALMMAVVTLAAVSSGAA. The RxLR signature appears at 47-50; it reads RLLR.

This sequence belongs to the RxLR effector family.

The protein resides in the secreted. It localises to the host nucleus. The protein localises to the host cytoplasm. Effector that completely suppresses the host cell death induced by cell death-inducing proteins. The protein is Secreted RxLR effector protein 15 of Plasmopara viticola (Downy mildew of grapevine).